The chain runs to 91 residues: Small ribosomal subunit protein uS19 (91 aa).

This sequence belongs to the universal ribosomal protein uS19 family.

Protein S19 forms a complex with S13 that binds strongly to the 16S ribosomal RNA. This is Small ribosomal subunit protein uS19 from Lactiplantibacillus plantarum (strain ATCC BAA-793 / NCIMB 8826 / WCFS1) (Lactobacillus plantarum).